A 295-amino-acid chain; its full sequence is uncharacterized protein (295 aa).

The ABC transporter domain occupies 2–226; that stretch reads LSIESLCKSY…QQTNVFTLSV (225 aa). An ATP-binding site is contributed by 34-41; it reads GPNGAGKT.

It belongs to the ABC transporter superfamily.

This is an uncharacterized protein from Bacillus subtilis (strain 168).